A 144-amino-acid polypeptide reads, in one-letter code: D-aminoacyl-tRNA deacylase (144 aa).

Positions 136 to 137 (GP) match the Gly-cisPro motif, important for rejection of L-amino acids motif.

Belongs to the DTD family. Homodimer.

The protein localises to the cytoplasm. It carries out the reaction glycyl-tRNA(Ala) + H2O = tRNA(Ala) + glycine + H(+). It catalyses the reaction a D-aminoacyl-tRNA + H2O = a tRNA + a D-alpha-amino acid + H(+). In terms of biological role, an aminoacyl-tRNA editing enzyme that deacylates mischarged D-aminoacyl-tRNAs. Also deacylates mischarged glycyl-tRNA(Ala), protecting cells against glycine mischarging by AlaRS. Acts via tRNA-based rather than protein-based catalysis; rejects L-amino acids rather than detecting D-amino acids in the active site. By recycling D-aminoacyl-tRNA to D-amino acids and free tRNA molecules, this enzyme counteracts the toxicity associated with the formation of D-aminoacyl-tRNA entities in vivo and helps enforce protein L-homochirality. The chain is D-aminoacyl-tRNA deacylase from Haemophilus ducreyi (strain 35000HP / ATCC 700724).